The chain runs to 356 residues: UDP-N-acetylglucosamine--N-acetylmuramyl-(pentapeptide) pyrophosphoryl-undecaprenol N-acetylglucosamine transferase (356 aa).

UDP-N-acetyl-alpha-D-glucosamine-binding positions include 11 to 13 (TGG), asparagine 123, arginine 159, serine 187, isoleucine 241, 260 to 265 (ALTVAE), and glutamine 286.

This sequence belongs to the glycosyltransferase 28 family. MurG subfamily.

The protein resides in the cell inner membrane. It carries out the reaction di-trans,octa-cis-undecaprenyl diphospho-N-acetyl-alpha-D-muramoyl-L-alanyl-D-glutamyl-meso-2,6-diaminopimeloyl-D-alanyl-D-alanine + UDP-N-acetyl-alpha-D-glucosamine = di-trans,octa-cis-undecaprenyl diphospho-[N-acetyl-alpha-D-glucosaminyl-(1-&gt;4)]-N-acetyl-alpha-D-muramoyl-L-alanyl-D-glutamyl-meso-2,6-diaminopimeloyl-D-alanyl-D-alanine + UDP + H(+). It participates in cell wall biogenesis; peptidoglycan biosynthesis. In terms of biological role, cell wall formation. Catalyzes the transfer of a GlcNAc subunit on undecaprenyl-pyrophosphoryl-MurNAc-pentapeptide (lipid intermediate I) to form undecaprenyl-pyrophosphoryl-MurNAc-(pentapeptide)GlcNAc (lipid intermediate II). This chain is UDP-N-acetylglucosamine--N-acetylmuramyl-(pentapeptide) pyrophosphoryl-undecaprenol N-acetylglucosamine transferase, found in Azoarcus sp. (strain BH72).